Consider the following 756-residue polypeptide: Multicystatin (756 aa).

Cystatin domains follow at residues 3 to 96, 97 to 191, 192 to 285, 286 to 380, 381 to 474, 475 to 568, 569 to 662, and 663 to 756; these read IVGG…DDST, MPGG…DDIA, KLGG…DDSA, KTGG…DSAK, IIGG…DDSA, and KPGG…DATK. Short sequence motifs (secondary area of contact) lie at residues 48 to 52, 142 to 146, 237 to 241, 331 to 335, 426 to 430, 520 to 524, 614 to 618, and 708 to 712; these read QIVAG, QVVAG, QLVSG, and QLVAG.

Belongs to the cystatin family. Phytocystatin subfamily. In terms of tissue distribution, expressed abundantly in tuber and leaf.

Probably has a role in the plant's defense system. This chain is Multicystatin, found in Solanum tuberosum (Potato).